We begin with the raw amino-acid sequence, 253 residues long: GTP cyclohydrolase III 2 (253 aa).

Residues 102–125 (LRDAGSAQDENRQEALSHRSPPGF) are disordered.

The protein belongs to the archaeal-type GTP cyclohydrolase family.

The catalysed reaction is GTP + 3 H2O = 2-amino-5-formylamino-6-(5-phospho-D-ribosylamino)pyrimidin-4(3H)-one + 2 phosphate + 2 H(+). In terms of biological role, catalyzes the formation of 2-amino-5-formylamino-6-ribofuranosylamino-4(3H)-pyrimidinone ribonucleotide monophosphate and inorganic phosphate from GTP. Also has an independent pyrophosphate phosphohydrolase activity. This chain is GTP cyclohydrolase III 2 (gch32), found in Halobacterium salinarum (strain ATCC 700922 / JCM 11081 / NRC-1) (Halobacterium halobium).